A 511-amino-acid chain; its full sequence is 2,3-bisphosphoglycerate-independent phosphoglycerate mutase (511 aa).

Residues Asp18 and Ser68 each coordinate Mn(2+). Residue Ser68 is the Phosphoserine intermediate of the active site. Substrate-binding positions include His129, 159 to 160 (RD), Arg191, Lys197, 261 to 264 (RSDR), and Lys329. Positions 396, 400, 437, 438, and 459 each coordinate Mn(2+). Residues 442 to 464 (ERMTKQAPDGSVRPYGGHTTNPV) are disordered.

This sequence belongs to the BPG-independent phosphoglycerate mutase family. Monomer. The cofactor is Mn(2+).

The enzyme catalyses (2R)-2-phosphoglycerate = (2R)-3-phosphoglycerate. Its pathway is carbohydrate degradation; glycolysis; pyruvate from D-glyceraldehyde 3-phosphate: step 3/5. In terms of biological role, catalyzes the interconversion of 2-phosphoglycerate and 3-phosphoglycerate. This is 2,3-bisphosphoglycerate-independent phosphoglycerate mutase from Streptomyces coelicolor (strain ATCC BAA-471 / A3(2) / M145).